Reading from the N-terminus, the 434-residue chain is Glutamate-1-semialdehyde 2,1-aminomutase 2 (434 aa).

The residue at position 270 (Lys270) is an N6-(pyridoxal phosphate)lysine.

The protein belongs to the class-III pyridoxal-phosphate-dependent aminotransferase family. HemL subfamily. Homodimer. The cofactor is pyridoxal 5'-phosphate.

It is found in the cytoplasm. It carries out the reaction (S)-4-amino-5-oxopentanoate = 5-aminolevulinate. It participates in porphyrin-containing compound metabolism; protoporphyrin-IX biosynthesis; 5-aminolevulinate from L-glutamyl-tRNA(Glu): step 2/2. The polypeptide is Glutamate-1-semialdehyde 2,1-aminomutase 2 (Bacillus cereus (strain G9842)).